The primary structure comprises 165 residues: UPF0303 protein Bcep1808_1522 (165 aa).

This sequence belongs to the UPF0303 family.

This is UPF0303 protein Bcep1808_1522 from Burkholderia vietnamiensis (strain G4 / LMG 22486) (Burkholderia cepacia (strain R1808)).